The chain runs to 398 residues: Succinate--CoA ligase [ADP-forming] subunit beta (398 aa).

In terms of domain architecture, ATP-grasp spans 9–253 (KEILNSFGVR…VREENATEVE (245 aa)). ATP contacts are provided by residues Lys-50, 57 to 59 (GRG), Val-106, and Glu-116. Mg(2+) is bound by residues Asn-208 and Asp-222. Substrate-binding positions include Asn-273 and 330–332 (GIV).

It belongs to the succinate/malate CoA ligase beta subunit family. Heterotetramer of two alpha and two beta subunits. Requires Mg(2+) as cofactor.

The catalysed reaction is succinate + ATP + CoA = succinyl-CoA + ADP + phosphate. It catalyses the reaction GTP + succinate + CoA = succinyl-CoA + GDP + phosphate. It functions in the pathway carbohydrate metabolism; tricarboxylic acid cycle; succinate from succinyl-CoA (ligase route): step 1/1. Functionally, succinyl-CoA synthetase functions in the citric acid cycle (TCA), coupling the hydrolysis of succinyl-CoA to the synthesis of either ATP or GTP and thus represents the only step of substrate-level phosphorylation in the TCA. The beta subunit provides nucleotide specificity of the enzyme and binds the substrate succinate, while the binding sites for coenzyme A and phosphate are found in the alpha subunit. This Christiangramia forsetii (strain DSM 17595 / CGMCC 1.15422 / KT0803) (Gramella forsetii) protein is Succinate--CoA ligase [ADP-forming] subunit beta.